The sequence spans 339 residues: Protein RecA (339 aa).

An ATP-binding site is contributed by 66-73 (GPESSGKT).

This sequence belongs to the RecA family.

It is found in the cytoplasm. Can catalyze the hydrolysis of ATP in the presence of single-stranded DNA, the ATP-dependent uptake of single-stranded DNA by duplex DNA, and the ATP-dependent hybridization of homologous single-stranded DNAs. It interacts with LexA causing its activation and leading to its autocatalytic cleavage. The sequence is that of Protein RecA from Geobacter metallireducens (strain ATCC 53774 / DSM 7210 / GS-15).